Reading from the N-terminus, the 400-residue chain is Ubiquitin-like modifier-activating enzyme 5 (400 aa).

ATP is bound by residues glycine 76, aspartate 97, lysine 120, asparagine 143, and asparagine 177. 2 residues coordinate Zn(2+): cysteine 219 and cysteine 222. Cysteine 243 acts as the Glycyl thioester intermediate in catalysis. Zn(2+)-binding residues include cysteine 296 and cysteine 301.

This sequence belongs to the ubiquitin-activating E1 family. UBA5 subfamily.

Its function is as follows. E1-like enzyme which activates UFM1. This chain is Ubiquitin-like modifier-activating enzyme 5, found in Drosophila virilis (Fruit fly).